The sequence spans 143 residues: Ribosome-binding factor A (143 aa).

A disordered region spans residues 1-20 (MRFMGKNKFHTGPGPSQRQL).

The protein belongs to the RbfA family. In terms of assembly, monomer. Binds 30S ribosomal subunits, but not 50S ribosomal subunits or 70S ribosomes.

It localises to the cytoplasm. Functionally, one of several proteins that assist in the late maturation steps of the functional core of the 30S ribosomal subunit. Associates with free 30S ribosomal subunits (but not with 30S subunits that are part of 70S ribosomes or polysomes). Required for efficient processing of 16S rRNA. May interact with the 5'-terminal helix region of 16S rRNA. The polypeptide is Ribosome-binding factor A (Roseobacter denitrificans (strain ATCC 33942 / OCh 114) (Erythrobacter sp. (strain OCh 114))).